Consider the following 427-residue polypeptide: Acyl-CoA hydrolase 2 (427 aa).

15–83 contributes to the a nucleoside 3',5'-cyclic phosphate binding site; sequence LLQKLPSSSL…FLLKQYDYFG (69 aa). Catalysis depends on charge relay system residues aspartate 337, serine 359, and glutamine 409. Positions 425–427 match the Microbody targeting signal motif; sequence SKL.

The protein belongs to the C/M/P thioester hydrolase family. Homotetramer. Mostly expressed in leaves and flowers, and, to a lower extent, in seedlings and siliques.

The protein resides in the peroxisome matrix. The enzyme catalyses a fatty acyl-CoA + H2O = a fatty acid + CoA + H(+). It carries out the reaction dodecanoyl-CoA + H2O = dodecanoate + CoA + H(+). The catalysed reaction is tetradecanoyl-CoA + H2O = tetradecanoate + CoA + H(+). It catalyses the reaction octadecanoyl-CoA + H2O = octadecanoate + CoA + H(+). The enzyme catalyses (9Z)-hexadecenoyl-CoA + H2O = (9Z)-hexadecenoate + CoA + H(+). It carries out the reaction (5Z,8Z,11Z,14Z)-eicosatetraenoyl-CoA + H2O = (5Z,8Z,11Z,14Z)-eicosatetraenoate + CoA + H(+). The catalysed reaction is hexadecanoyl-CoA + H2O = hexadecanoate + CoA + H(+). It catalyses the reaction (9Z)-octadecenoyl-CoA + H2O = (9Z)-octadecenoate + CoA + H(+). The enzyme catalyses (9Z,12Z)-octadecadienoyl-CoA + H2O = (9Z,12Z)-octadecadienoate + CoA + H(+). Its pathway is lipid metabolism; fatty acid metabolism. Insensitive to feedback inhibition by free coenzyme A (CoASH). Catalyzes the hydrolysis of acyl-CoAs into free fatty acids and coenzyme A (CoASH), regulating their respective intracellular levels. Active with both medium chain and long chain acyl-CoAs (e.g. 12:0-CoA, 14:0-CoA, 16:0-CoA, 18:0-CoA, 16:1-CoA, 18:1-CoA, 18:2-CoA and 20:4-CoA) as substrates, palmitoleoyl-CoA (16:1-CoA) being the favorite substrate. The polypeptide is Acyl-CoA hydrolase 2 (Arabidopsis thaliana (Mouse-ear cress)).